The primary structure comprises 374 residues: Phosphatidylglycerol--prolipoprotein diacylglyceryl transferase (374 aa).

4 helical membrane passes run 33–53 (ICFI…IALF), 155–175 (LCWF…VFFY), 195–215 (LASH…TSYI), and 222–242 (LSFL…AVFI). R243 provides a ligand contact to a 1,2-diacyl-sn-glycero-3-phospho-(1'-sn-glycerol). 3 helical membrane-spanning segments follow: residues 279–299 (PVQL…FTLW), 306–326 (LAAG…RFLL), and 341–361 (ILQM…CLVW).

It belongs to the Lgt family.

It is found in the cell inner membrane. The catalysed reaction is L-cysteinyl-[prolipoprotein] + a 1,2-diacyl-sn-glycero-3-phospho-(1'-sn-glycerol) = an S-1,2-diacyl-sn-glyceryl-L-cysteinyl-[prolipoprotein] + sn-glycerol 1-phosphate + H(+). The protein operates within protein modification; lipoprotein biosynthesis (diacylglyceryl transfer). Its function is as follows. Catalyzes the transfer of the diacylglyceryl group from phosphatidylglycerol to the sulfhydryl group of the N-terminal cysteine of a prolipoprotein, the first step in the formation of mature lipoproteins. This Protochlamydia amoebophila (strain UWE25) protein is Phosphatidylglycerol--prolipoprotein diacylglyceryl transferase.